The chain runs to 153 residues: Endoribonuclease YbeY (153 aa).

Positions 119, 123, and 129 each coordinate Zn(2+).

Belongs to the endoribonuclease YbeY family. Zn(2+) is required as a cofactor.

It localises to the cytoplasm. In terms of biological role, single strand-specific metallo-endoribonuclease involved in late-stage 70S ribosome quality control and in maturation of the 3' terminus of the 16S rRNA. The protein is Endoribonuclease YbeY of Desulforamulus reducens (strain ATCC BAA-1160 / DSM 100696 / MI-1) (Desulfotomaculum reducens).